The following is a 266-amino-acid chain: uncharacterized protein (266 aa).

8 helical membrane-spanning segments follow: residues 9 to 29 (IAAL…LFIF), 37 to 57 (TMPH…LVFY), 69 to 89 (LIKV…ISLL), 123 to 143 (FLLM…MIFT), 153 to 173 (YNPF…LVIA), 184 to 204 (LPLA…LFLL), 216 to 236 (SVFA…ILIL), and 246 to 266 (TNSL…MVFV).

It is found in the cell membrane. This is an uncharacterized protein from Haemophilus influenzae (strain ATCC 51907 / DSM 11121 / KW20 / Rd).